The primary structure comprises 169 residues: Peptide deformylase (169 aa).

Fe cation is bound by residues Cys91 and His133. The active site involves Glu134. His137 provides a ligand contact to Fe cation.

This sequence belongs to the polypeptide deformylase family. It depends on Fe(2+) as a cofactor.

The enzyme catalyses N-terminal N-formyl-L-methionyl-[peptide] + H2O = N-terminal L-methionyl-[peptide] + formate. In terms of biological role, removes the formyl group from the N-terminal Met of newly synthesized proteins. Requires at least a dipeptide for an efficient rate of reaction. N-terminal L-methionine is a prerequisite for activity but the enzyme has broad specificity at other positions. The protein is Peptide deformylase of Haemophilus influenzae (strain 86-028NP).